We begin with the raw amino-acid sequence, 376 residues long: Putative 12-oxophytodienoate reductase 2 (376 aa).

Residues 31–33 (PLT), Ala64, and Gln106 contribute to the FMN site. 178–181 (HGAH) is a substrate binding site. Tyr183 (proton donor) is an active-site residue. Residues Arg230, Gly301, and 322-323 (GR) each bind FMN.

This sequence belongs to the NADH:flavin oxidoreductase/NADH oxidase family. FMN serves as cofactor.

Its function is as follows. Putative oxophytodienoate reductase that may be involved in the biosynthesis or metabolism of oxylipin signaling molecules. This is Putative 12-oxophytodienoate reductase 2 (OPR2) from Oryza sativa subsp. japonica (Rice).